The chain runs to 640 residues: Spindle assembly abnormal protein 6 homolog (640 aa).

In terms of domain architecture, PISA spans 40-92 (VHKKDLAVRLTDDADPFFLYNLVISEEDFQSLKSQQGLLVDFSAFPQKFIDLL). A coiled-coil region spans residues 154–475 (LARCLKCLKE…KQLLKTNENV (322 aa)).

As to quaternary structure, nine homodimers form a cartwheel structure with an internal diameter of 23 nM and radial spokes connecting to the microtubule triplets.

Its subcellular location is the cytoplasm. The protein resides in the cytoskeleton. It is found in the microtubule organizing center. It localises to the centrosome. Its function is as follows. Central scaffolding component of the centrioles ensuring their 9-fold symmetry. Required for centrosome biogenesis and duplication: required both for mother-centriole-dependent centriole duplication and deuterosome-dependent centriole amplification in multiciliated cells. In Gallus gallus (Chicken), this protein is Spindle assembly abnormal protein 6 homolog (SASS6).